The following is a 180-amino-acid chain: Lysine-specific demethylase 5C (180 aa).

Residues Pro-116–Gly-159 form a disordered region. The residue at position 148 (Ser-148) is a Phosphoserine.

The protein belongs to the JARID1 histone demethylase family. Part of two distinct complexes, one containing E2F6, and the other containing REST. Interacts with ZMYND8. The cofactor is Fe(2+).

Its subcellular location is the nucleus. It carries out the reaction N(6),N(6),N(6)-trimethyl-L-lysyl(4)-[histone H3] + 3 2-oxoglutarate + 3 O2 = L-lysyl(4)-[histone H3] + 3 formaldehyde + 3 succinate + 3 CO2. In terms of biological role, histone demethylase that specifically demethylates 'Lys-4' of histone H3, thereby playing a central role in histone code. Does not demethylate histone H3 'Lys-9', H3 'Lys-27', H3 'Lys-36', H3 'Lys-79' or H4 'Lys-20'. Demethylates trimethylated and dimethylated but not monomethylated H3 'Lys-4'. Participates in transcriptional repression of neuronal genes by recruiting histone deacetylases and REST at neuron-restrictive silencer elements. Represses the CLOCK-BMAL1 heterodimer-mediated transcriptional activation of the core clock component PER2. This chain is Lysine-specific demethylase 5C (KDM5C), found in Cricetulus griseus (Chinese hamster).